The chain runs to 783 residues: Cation/H(+) antiporter 2 (783 aa).

The next 12 helical transmembrane spans lie at 19-39 (LNTMFIQMACILVFSQLFYLL), 43-63 (CGQAGPVAQILAGIVLSPVLL), 81-101 (YYSFFSFALRTSFMFLIGLEV), 121-141 (FVVSGLLSFASLMLFIPLFGI), 145-165 (YFTFFLVLLVTLSNTASPVVV), 186-206 (ALFIELTNVVLYTIIMAFISG), 208-228 (IILELFLFLLATVALILINMV), 242-262 (YLSKAETLVFFIFLLIIGITI), 300-320 (EFVLPVYFGYIGFRFSIIALT), 323-343 (FYLGIVIIVIVTIAGKFIGVI), 355-375 (YWLFLPTILSVKGHVGLLLLD), and 391-411 (MMVAALVITTLVSGVLASFLL).

The protein belongs to the monovalent cation:proton antiporter 2 (CPA2) transporter (TC 2.A.37) family. CHX (TC 2.A.37.4) subfamily. Specifically expressed in pollen.

The protein resides in the membrane. Its function is as follows. May operate as a cation/H(+) antiporter. The sequence is that of Cation/H(+) antiporter 2 (CHX2) from Arabidopsis thaliana (Mouse-ear cress).